The primary structure comprises 101 residues: Small ribosomal subunit protein uS14 (101 aa).

It belongs to the universal ribosomal protein uS14 family. As to quaternary structure, part of the 30S ribosomal subunit. Contacts proteins S3 and S10.

In terms of biological role, binds 16S rRNA, required for the assembly of 30S particles and may also be responsible for determining the conformation of the 16S rRNA at the A site. The sequence is that of Small ribosomal subunit protein uS14 from Novosphingobium aromaticivorans (strain ATCC 700278 / DSM 12444 / CCUG 56034 / CIP 105152 / NBRC 16084 / F199).